The following is a 961-amino-acid chain: Vinculin (961 aa).

A run of 2 repeats spans residues 258-362 (ELDN…MGEL) and 371-470 (LGVD…ELKA). A 2 X repeats region spans residues 258–470 (ELDNLTVLKK…LTQKLYELKA (213 aa)). Residues 720 to 778 (AIAPPQPPPLPTSLPPPIPELSALHLSNQNAERAPPRPPLPREGLAPVRPPPPETDDED) are disordered. Over residues 723–738 (PPQPPPLPTSLPPPIP) the composition is skewed to pro residues. Threonine 774 is subject to Phosphothreonine.

It belongs to the vinculin/alpha-catenin family. In terms of assembly, exhibits self-association properties.

It localises to the cytoplasm. The protein resides in the cytoskeleton. It is found in the cell junction. The protein localises to the adherens junction. Its subcellular location is the cell membrane. Functionally, involved in cell adhesion. May be involved in the attachment of the actin-based microfilaments to the plasma membrane. The chain is Vinculin (Vinc) from Drosophila melanogaster (Fruit fly).